A 431-amino-acid polypeptide reads, in one-letter code: Mevalonate kinase (431 aa).

Residues Lys-13, Ser-139, and 144-150 contribute to the ATP site; that span reads GAGLGSS. Ser-150 and Glu-198 together coordinate Mg(2+). Asp-209 (proton acceptor) is an active-site residue.

Belongs to the GHMP kinase family. Mevalonate kinase subfamily. Homodimer.

The protein localises to the cytoplasm. It localises to the cytosol. The catalysed reaction is (R)-mevalonate + ATP = (R)-5-phosphomevalonate + ADP + H(+). Its pathway is isoprenoid biosynthesis; isopentenyl diphosphate biosynthesis via mevalonate pathway; isopentenyl diphosphate from (R)-mevalonate: step 1/3. Functionally, mevalonate kinase; part of the second module of ergosterol biosynthesis pathway that includes the middle steps of the pathway. ERG12 converts mevalonate into 5-phosphomevalonate. The second module is carried out in the vacuole and involves the formation of farnesyl diphosphate, which is also an important intermediate in the biosynthesis of ubiquinone, dolichol, heme and prenylated proteins. Activity by the mevalonate kinase ERG12 first converts mevalonate into 5-phosphomevalonate. 5-phosphomevalonate is then further converted to 5-diphosphomevalonate by the phosphomevalonate kinase ERG8. The diphosphomevalonate decarboxylase MVD then produces isopentenyl diphosphate. The isopentenyl-diphosphate delta-isomerase IDI1 then catalyzes the 1,3-allylic rearrangement of the homoallylic substrate isopentenyl (IPP) to its highly electrophilic allylic isomer, dimethylallyl diphosphate (DMAPP). Finally the farnesyl diphosphate synthase ERG20 catalyzes the sequential condensation of isopentenyl pyrophosphate with dimethylallyl pyrophosphate, and then with the resultant geranylpyrophosphate to the ultimate product farnesyl pyrophosphate. This is Mevalonate kinase from Candida albicans (strain SC5314 / ATCC MYA-2876) (Yeast).